A 354-amino-acid polypeptide reads, in one-letter code: MSLFDTINSGGAQLLGVAWPTVWALVRILVVAVVILLCVAYLILWERKLIGWMHVRLGPNRVGPAGLLQPIADVLKLLLKEVIHPTAASRWLYLIAPVMTVVPAFAVWAVIPFQAGAVLANINAGLLYAMAISSIGVYAVILAGWASNSKYAFLGAMRAAAQMVSYEISMGFALVLVLMTAGSLNLSEIVGSQQHGFFAGHGVNFLSWNWLPLLPVFVIYFISGIAETNRHPFDVVEGESEIVAGHMIDYSGMAFALFFLAEYINMIVISALAATLFLGGWDAPFEFLSFIPGIFWLVLKVFALLSVFIWARATFPRYRYDQIMRLGWKVFLPVCVFWVIVVGFWMMSPLNIWK.

8 consecutive transmembrane segments (helical) span residues 25–45, 91–111, 126–146, 170–190, 205–225, 253–273, 290–310, and 330–350; these read LVRI…LILW, WLYL…WAVI, LLYA…AGWA, MGFA…SEIV, FLSW…ISGI, MAFA…SALA, FIPG…VFIW, and VFLP…MSPL.

It belongs to the complex I subunit 1 family. NDH-1 is composed of 14 different subunits. Subunits NuoA, H, J, K, L, M, N constitute the membrane sector of the complex.

It is found in the cell inner membrane. It catalyses the reaction a quinone + NADH + 5 H(+)(in) = a quinol + NAD(+) + 4 H(+)(out). Its function is as follows. NDH-1 shuttles electrons from NADH, via FMN and iron-sulfur (Fe-S) centers, to quinones in the respiratory chain. The immediate electron acceptor for the enzyme in this species is believed to be ubiquinone. Couples the redox reaction to proton translocation (for every two electrons transferred, four hydrogen ions are translocated across the cytoplasmic membrane), and thus conserves the redox energy in a proton gradient. This subunit may bind ubiquinone. In Burkholderia thailandensis (strain ATCC 700388 / DSM 13276 / CCUG 48851 / CIP 106301 / E264), this protein is NADH-quinone oxidoreductase subunit H.